A 67-amino-acid chain; its full sequence is Large ribosomal subunit protein uL29 (67 aa).

Belongs to the universal ribosomal protein uL29 family.

This Solibacter usitatus (strain Ellin6076) protein is Large ribosomal subunit protein uL29.